We begin with the raw amino-acid sequence, 273 residues long: uncharacterized protein (273 aa).

A helical transmembrane segment spans residues 7–25 (FFRWAFLIATVYVAYYFLV). Disordered stretches follow at residues 34–154 (KPQK…LKMK) and 168–273 (LHNS…DSLW). Over residues 36 to 54 (QKSKLTKLGKQKQRQKQKN) the composition is skewed to basic residues. The segment covering 55 to 91 (TKKDTLVNRETPSKKSQKLETSDALKSKSKDSSKKEP) has biased composition (basic and acidic residues). The span at 92–101 (VVVPKKGTPK) shows a compositional bias: low complexity. Over residues 115–144 (PKKEKLVGKNPAEKEDTTDVEDTQKLEQKH) the composition is skewed to basic and acidic residues. Positions 145-154 (STTPSSLKMK) are enriched in polar residues. Positions 201 to 212 (KRQRQNQQKKLR) are enriched in basic residues. Residues 213–240 (AKEMQELADEEQRRRLAAHRKELHEANR) show a composition bias toward basic and acidic residues. Over residues 245–266 (LNNSSRSAYSYINNGQAGSSKG) the composition is skewed to polar residues.

It localises to the cytoplasm. It is found in the membrane. This is an uncharacterized protein from Schizosaccharomyces pombe (strain 972 / ATCC 24843) (Fission yeast).